We begin with the raw amino-acid sequence, 649 residues long: Exolysin (649 aa).

A helical membrane pass occupies residues Leu37 to Val57. Residues Lys184–Lys268 adopt a coiled-coil conformation. Residues Ala258–Lys275 are compositionally biased toward basic and acidic residues. The interval Ala258–Gln325 is disordered. The segment covering Ala278–Ser312 has biased composition (pro residues). The catalytic stretch occupies residues Gly407–Pro649.

It depends on Ca(2+) as a cofactor. Requires Mg(2+) as cofactor.

It localises to the membrane. The protein localises to the virion. Inhibited by Mn(2+), Cu(2+), Co(2+), Fe(2+), Zn(2+), Ni(2+), EDTA and EGTA. In terms of biological role, during viral entry, involved in the degradation of the host cell wall at the site of attachment. The chain is Exolysin from Chlorella (PBCV-1).